We begin with the raw amino-acid sequence, 41 residues long: Large ribosomal subunit protein bL36 (41 aa).

The protein belongs to the bacterial ribosomal protein bL36 family.

The sequence is that of Large ribosomal subunit protein bL36 from Rickettsia prowazekii (strain Madrid E).